A 428-amino-acid chain; its full sequence is Protein clpf-1 (428 aa).

ATP is bound by residues glutamate 16 and arginine 56. The segment at lysine 99–leucine 118 is disordered. Aspartate 124–threonine 129 is an ATP binding site.

This sequence belongs to the Clp1 family. Clp1 subfamily.

The protein localises to the nucleus. Its function is as follows. Required for endonucleolytic cleavage during polyadenylation-dependent pre-mRNA 3'-end formation. The sequence is that of Protein clpf-1 from Caenorhabditis briggsae.